A 128-amino-acid polypeptide reads, in one-letter code: Large ribosomal subunit protein bL19 (128 aa).

The protein belongs to the bacterial ribosomal protein bL19 family.

Functionally, this protein is located at the 30S-50S ribosomal subunit interface and may play a role in the structure and function of the aminoacyl-tRNA binding site. This chain is Large ribosomal subunit protein bL19, found in Ralstonia nicotianae (strain ATCC BAA-1114 / GMI1000) (Ralstonia solanacearum).